Reading from the N-terminus, the 293-residue chain is Movement protein BC1 (293 aa).

It belongs to the begomovirus movement protein BC1 family. As to quaternary structure, binds to dimeric supercoiled plasmid DNA. Post-translationally, phosphorylated.

The protein resides in the host cell membrane. Its subcellular location is the host microsome membrane. It is found in the host endoplasmic reticulum membrane. In terms of biological role, transports viral genome to neighboring plant cells directly through plasmosdesmata, without any budding. The movement protein allows efficient cell to cell propagation, by bypassing the host cell wall barrier. Begomovirus genome is shuttled out of nucleus by Nuclear shuttle protein (NSP) and the movement protein transports the DNA-NSP complex to cell plasmodesmata and facilitates further movement across the cell wall. The protein is Movement protein BC1 of Potato yellow mosaic virus (isolate Venezuela) (PYMV).